The sequence spans 429 residues: Adenylosuccinate synthetase (429 aa).

Residues 12-18 (GDEGKGK) and 40-42 (GHT) contribute to the GTP site. Asp13 (proton acceptor) is an active-site residue. Asp13 and Gly40 together coordinate Mg(2+). Residues 13–16 (DEGK), 38–41 (NAGH), Thr128, Arg142, Gln223, Thr238, and Arg302 contribute to the IMP site. His41 functions as the Proton donor in the catalytic mechanism. 298 to 304 (TVTGRPR) serves as a coordination point for substrate. Residues Arg304, 330-332 (LLD), and 412-414 (SVG) contribute to the GTP site.

The protein belongs to the adenylosuccinate synthetase family. In terms of assembly, homodimer. Requires Mg(2+) as cofactor.

It is found in the cytoplasm. It carries out the reaction IMP + L-aspartate + GTP = N(6)-(1,2-dicarboxyethyl)-AMP + GDP + phosphate + 2 H(+). Its pathway is purine metabolism; AMP biosynthesis via de novo pathway; AMP from IMP: step 1/2. Its function is as follows. Plays an important role in the de novo pathway of purine nucleotide biosynthesis. Catalyzes the first committed step in the biosynthesis of AMP from IMP. This Limosilactobacillus fermentum (strain NBRC 3956 / LMG 18251) (Lactobacillus fermentum) protein is Adenylosuccinate synthetase.